A 329-amino-acid polypeptide reads, in one-letter code: Ferredoxin--NADP reductase 2 (329 aa).

8 residues coordinate FAD: T18, E37, Q45, Y50, V90, F124, D285, and S326.

This sequence belongs to the ferredoxin--NADP reductase type 2 family. Homodimer. It depends on FAD as a cofactor.

The catalysed reaction is 2 reduced [2Fe-2S]-[ferredoxin] + NADP(+) + H(+) = 2 oxidized [2Fe-2S]-[ferredoxin] + NADPH. This is Ferredoxin--NADP reductase 2 from Bacillus mycoides (strain KBAB4) (Bacillus weihenstephanensis).